The chain runs to 255 residues: Taurine import ATP-binding protein TauB (255 aa).

In terms of domain architecture, ABC transporter spans leucine 2–serine 229. Glycine 34–threonine 41 is a binding site for ATP.

This sequence belongs to the ABC transporter superfamily. Taurine importer (TC 3.A.1.17.1) family. As to quaternary structure, the complex is composed of two ATP-binding proteins (TauB), two transmembrane proteins (TauC) and a solute-binding protein (TauA).

Its subcellular location is the cell inner membrane. The catalysed reaction is taurine(out) + ATP + H2O = taurine(in) + ADP + phosphate + H(+). Part of the ABC transporter complex TauABC involved in taurine import. Responsible for energy coupling to the transport system. The chain is Taurine import ATP-binding protein TauB from Escherichia coli O6:H1 (strain CFT073 / ATCC 700928 / UPEC).